Reading from the N-terminus, the 440-residue chain is Xylose isomerase (440 aa).

Catalysis depends on residues H101 and D104. 7 residues coordinate Mg(2+): E232, E268, H271, D296, D307, D309, and D339.

It belongs to the xylose isomerase family. In terms of assembly, homotetramer. Mg(2+) is required as a cofactor.

The protein localises to the cytoplasm. The catalysed reaction is alpha-D-xylose = alpha-D-xylulofuranose. In Enterobacter sp. (strain 638), this protein is Xylose isomerase.